The sequence spans 403 residues: Tyrosine--tRNA ligase (403 aa).

Positions proline 45–histidine 54 match the 'HIGH' region motif. The short motif at lysine 229–serine 233 is the 'KMSKS' region element. Position 232 (lysine 232) interacts with ATP. The region spanning valine 341 to phenylalanine 402 is the S4 RNA-binding domain.

It belongs to the class-I aminoacyl-tRNA synthetase family. TyrS type 2 subfamily. In terms of assembly, homodimer.

Its subcellular location is the cytoplasm. The catalysed reaction is tRNA(Tyr) + L-tyrosine + ATP = L-tyrosyl-tRNA(Tyr) + AMP + diphosphate + H(+). Its function is as follows. Catalyzes the attachment of tyrosine to tRNA(Tyr) in a two-step reaction: tyrosine is first activated by ATP to form Tyr-AMP and then transferred to the acceptor end of tRNA(Tyr). This is Tyrosine--tRNA ligase from Geobacter sulfurreducens (strain ATCC 51573 / DSM 12127 / PCA).